Here is a 121-residue protein sequence, read N- to C-terminus: Large ribosomal subunit protein bL19 (121 aa).

It belongs to the bacterial ribosomal protein bL19 family.

Functionally, this protein is located at the 30S-50S ribosomal subunit interface and may play a role in the structure and function of the aminoacyl-tRNA binding site. The chain is Large ribosomal subunit protein bL19 from Neisseria gonorrhoeae (strain ATCC 700825 / FA 1090).